We begin with the raw amino-acid sequence, 299 residues long: Troponin T, cardiac muscle (299 aa).

A compositionally biased stretch (acidic residues) spans 1–71 (MSDAEEEVVE…EARDAEDGPV (71 aa)). Disordered regions lie at residues 1-97 (MSDA…GERV) and 137-220 (DRIE…EKKK). S2 carries the post-translational modification N-acetylserine. A Phosphoserine modification is found at S2. Basic and acidic residues-rich tracts occupy residues 137-185 (DRIE…DEAR) and 204-220 (QTER…EKKK). T205 bears the Phosphothreonine; by PKC/PRKCA mark. Residue S209 is modified to Phosphoserine; by PKC/PRKCA. T214 is modified (phosphothreonine; by PKC/PRKCA and RAF1). T295 is subject to Phosphothreonine; by PKC/PRKCA.

This sequence belongs to the troponin T family. Phosphorylation at Thr-214 by PRKCA induces significant reduction in myofilament calcium sensitivity and actomyosin ATPase activity.

In terms of biological role, troponin T is the tropomyosin-binding subunit of troponin, the thin filament regulatory complex which confers calcium-sensitivity to striated muscle actomyosin ATPase activity. The protein is Troponin T, cardiac muscle (Tnnt2) of Rattus norvegicus (Rat).